Consider the following 384-residue polypeptide: Carbamoyl phosphate synthase small chain (384 aa).

The CPSase stretch occupies residues 1–192 (MMKRIPAILV…LTDNIRVHRV (192 aa)). 3 residues coordinate L-glutamine: S51, G244, and G246. A Glutamine amidotransferase type-1 domain is found at 196 to 382 (KVIVIDFGVK…IEIMTKSKNK (187 aa)). The active-site Nucleophile is the C272. Residues M273, Q276, N312, G314, and F315 each contribute to the L-glutamine site. Active-site residues include H355 and E357.

The protein belongs to the CarA family. As to quaternary structure, composed of two chains; the small (or glutamine) chain promotes the hydrolysis of glutamine to ammonia, which is used by the large (or ammonia) chain to synthesize carbamoyl phosphate. Tetramer of heterodimers (alpha,beta)4.

It localises to the plastid. The protein resides in the chloroplast. The enzyme catalyses hydrogencarbonate + L-glutamine + 2 ATP + H2O = carbamoyl phosphate + L-glutamate + 2 ADP + phosphate + 2 H(+). The catalysed reaction is L-glutamine + H2O = L-glutamate + NH4(+). Its pathway is amino-acid biosynthesis; L-arginine biosynthesis; carbamoyl phosphate from bicarbonate: step 1/1. It functions in the pathway pyrimidine metabolism; UMP biosynthesis via de novo pathway; (S)-dihydroorotate from bicarbonate: step 1/3. Small subunit of the glutamine-dependent carbamoyl phosphate synthetase (CPSase). CPSase catalyzes the formation of carbamoyl phosphate from the ammonia moiety of glutamine, carbonate, and phosphate donated by ATP, constituting the first step of 2 biosynthetic pathways, one leading to arginine and/or urea and the other to pyrimidine nucleotides. The small subunit (glutamine amidotransferase) binds and cleaves glutamine to supply the large subunit with the substrate ammonia. The chain is Carbamoyl phosphate synthase small chain from Pyropia yezoensis (Susabi-nori).